Consider the following 735-residue polypeptide: Serine/threonine-protein kinase BRSK2 (735 aa).

In terms of domain architecture, Protein kinase spans tyrosine 20–tyrosine 271. Residues leucine 26 to valine 34 and lysine 49 contribute to the ATP site. Aspartate 142 acts as the Proton acceptor in catalysis. Threonine 175 carries the phosphothreonine; by LKB1 modification. Threonine 261 carries the post-translational modification Phosphothreonine; by PKA. Phosphoserine is present on serine 295. Positions aspartate 298–aspartate 340 constitute a UBA domain. Residues proline 346–aspartate 367 show a composition bias toward basic and acidic residues. 2 disordered regions span residues proline 346–tryptophan 476 and arginine 492–glutamate 516. Phosphoserine is present on residues serine 368, serine 383, serine 394, serine 413, serine 424, and serine 428. The span at serine 411–proline 429 shows a compositional bias: low complexity. The segment covering threonine 432–lysine 446 has biased composition (pro residues). The residue at position 456 (serine 456) is a Phosphoserine. Residues threonine 460, threonine 464, and threonine 510 each carry the phosphothreonine modification. 3 positions are modified to phosphoserine: serine 513, serine 514, and serine 521. Residues lysine 604–asparagine 606 carry the KEN box motif. A disordered region spans residues lysine 682–proline 735.

The protein belongs to the protein kinase superfamily. CAMK Ser/Thr protein kinase family. SNF1 subfamily. Interacts with FZR1, a regulatory subunit of the APC ubiquitin ligase complex. Interacts with COPS5. Interacts with PAK1. Mg(2+) is required as a cofactor. May be phosphorylated at Thr-261 by PKA. Phosphorylated at Thr-175 by STK11/LKB1 in complex with STE20-related adapter-alpha (STRADA) pseudo kinase and CAB39. Not phosphorylated at Thr-175 by CaMKK2. In contrast, it is phosphorylated and activated by CaMKK1. May be inactivated via dephosphorylation of Thr-175 by PP2C. Post-translationally, polyubiquitinated by the APC complex in conjunction with FZR1, leading to its proteasomal degradation. Targeted for proteasomal degradation by interaction with COPS5. BRSK2 levels change during the cell cycle. BRSK2 levels are low at the G1/S boundary and gradually increase as cells progress into G2 phase. BRSK2 levels decrease rapidly at the end of mitosis. In terms of tissue distribution, detected in pancreas islets and in brain (at protein level). Detected in brain and pancreas.

The protein localises to the cytoplasm. It localises to the cytoskeleton. Its subcellular location is the microtubule organizing center. It is found in the centrosome. The protein resides in the perinuclear region. The protein localises to the endoplasmic reticulum. The enzyme catalyses L-seryl-[protein] + ATP = O-phospho-L-seryl-[protein] + ADP + H(+). It carries out the reaction L-threonyl-[protein] + ATP = O-phospho-L-threonyl-[protein] + ADP + H(+). It catalyses the reaction L-seryl-[tau protein] + ATP = O-phospho-L-seryl-[tau protein] + ADP + H(+). The catalysed reaction is L-threonyl-[tau protein] + ATP = O-phospho-L-threonyl-[tau protein] + ADP + H(+). Its activity is regulated as follows. Activated by phosphorylation on Thr-175 by STK11/LKB1. Functionally, serine/threonine-protein kinase that plays a key role in polarization of neurons and axonogenesis, cell cycle progress and insulin secretion. Phosphorylates CDK16, CDC25C, MAPT/TAU, PAK1 and WEE1. Following phosphorylation and activation by STK11/LKB1, acts as a key regulator of polarization of cortical neurons, probably by mediating phosphorylation of microtubule-associated proteins such as MAPT/TAU at 'Thr-504' and 'Ser-554'. Also regulates neuron polarization by mediating phosphorylation of WEE1 at 'Ser-642' in post-mitotic neurons, leading to down-regulate WEE1 activity in polarized neurons. Plays a role in the regulation of the mitotic cell cycle progress and the onset of mitosis. Plays a role in the regulation of insulin secretion in response to elevated glucose levels, probably via phosphorylation of CDK16 and PAK1. While BRSK2 phosphorylated at Thr-175 can inhibit insulin secretion, BRSK2 phosphorylated at Thr-261 can promote insulin secretion. Regulates reorganization of the actin cytoskeleton. May play a role in the apoptotic response triggered by endoplasmic reticulum (ER) stress. The protein is Serine/threonine-protein kinase BRSK2 (Brsk2) of Mus musculus (Mouse).